Consider the following 546-residue polypeptide: Chaperonin GroEL (546 aa).

ATP contacts are provided by residues 30-33, Lys51, 87-91, Gly415, and Asp495; these read TLGP and DGTTT.

Belongs to the chaperonin (HSP60) family. As to quaternary structure, forms a cylinder of 14 subunits composed of two heptameric rings stacked back-to-back. Interacts with the co-chaperonin GroES.

The protein resides in the cytoplasm. It carries out the reaction ATP + H2O + a folded polypeptide = ADP + phosphate + an unfolded polypeptide.. Together with its co-chaperonin GroES, plays an essential role in assisting protein folding. The GroEL-GroES system forms a nano-cage that allows encapsulation of the non-native substrate proteins and provides a physical environment optimized to promote and accelerate protein folding. The chain is Chaperonin GroEL from Brucella suis (strain ATCC 23445 / NCTC 10510).